The sequence spans 230 residues: Ribosomal RNA small subunit methyltransferase I (230 aa).

Belongs to the methyltransferase superfamily. RsmI family.

The protein localises to the cytoplasm. It carries out the reaction cytidine(1402) in 16S rRNA + S-adenosyl-L-methionine = 2'-O-methylcytidine(1402) in 16S rRNA + S-adenosyl-L-homocysteine + H(+). Catalyzes the 2'-O-methylation of the ribose of cytidine 1402 (C1402) in 16S rRNA. This is Ribosomal RNA small subunit methyltransferase I from Hydrogenobaculum sp. (strain Y04AAS1).